Consider the following 126-residue polypeptide: Nascent polypeptide-associated complex protein (126 aa).

The region spanning 10–77 (PRMMKQMQKM…AKKVAKEEEK (68 aa)) is the NAC-A/B domain.

The protein belongs to the NAC-alpha family. Homodimer. Interacts with the ribosome. Binds ribosomal RNA.

Contacts the emerging nascent chain on the ribosome. The sequence is that of Nascent polypeptide-associated complex protein from Methanococcus maripaludis (strain DSM 14266 / JCM 13030 / NBRC 101832 / S2 / LL).